The primary structure comprises 271 residues: Co-chaperone protein DjlA (271 aa).

Residues 1 to 6 (MQYWGK) are Periplasmic-facing. A helical transmembrane segment spans residues 7–31 (IIGVAVALIMGGGFWGVVLGLLIGH). Over 32-271 (MFDKARSRKM…ELIKQQKGFK (240 aa)) the chain is Cytoplasmic. A J domain is found at 205–271 (DACNVLGVKP…ELIKQQKGFK (67 aa)).

In terms of assembly, homodimer.

It is found in the cell inner membrane. In terms of biological role, regulatory DnaK co-chaperone. Direct interaction between DnaK and DjlA is needed for the induction of the wcaABCDE operon, involved in the synthesis of a colanic acid polysaccharide capsule, possibly through activation of the RcsB/RcsC phosphotransfer signaling pathway. The colanic acid capsule may help the bacterium survive conditions outside the host. In Escherichia coli O6:H1 (strain CFT073 / ATCC 700928 / UPEC), this protein is Co-chaperone protein DjlA.